Reading from the N-terminus, the 110-residue chain is NADH-quinone oxidoreductase subunit K (110 aa).

3 helical membrane passes run 13–33, 41–61, and 73–93; these read LNHYLILSSLVFTIGMFGLFM, ILMSIELMLLAVNINFVAFSI, and IIILTVAAAETSIGLAILLIY.

This sequence belongs to the complex I subunit 4L family. In terms of assembly, NDH-1 is composed of 14 different subunits. Subunits NuoA, H, J, K, L, M, N constitute the membrane sector of the complex.

The protein resides in the cell inner membrane. The enzyme catalyses a quinone + NADH + 5 H(+)(in) = a quinol + NAD(+) + 4 H(+)(out). In terms of biological role, NDH-1 shuttles electrons from NADH, via FMN and iron-sulfur (Fe-S) centers, to quinones in the respiratory chain. The immediate electron acceptor for the enzyme in this species is believed to be ubiquinone. Couples the redox reaction to proton translocation (for every two electrons transferred, four hydrogen ions are translocated across the cytoplasmic membrane), and thus conserves the redox energy in a proton gradient. The polypeptide is NADH-quinone oxidoreductase subunit K (Rickettsia conorii (strain ATCC VR-613 / Malish 7)).